Reading from the N-terminus, the 186-residue chain is Quinone reductase (186 aa).

Residues 13-20 (SLRKESYN), 80-83 (EYNR), and serine 116 contribute to the FMN site.

The protein belongs to the SsuE family. As to quaternary structure, homotetramer. Dimer of dimers. The tetrameric configuration has a central role in chromate reductase activity. FMN is required as a cofactor.

The enzyme catalyses a quinone + NADH + H(+) = a quinol + NAD(+). It catalyses the reaction a quinone + NADPH + H(+) = a quinol + NADP(+). It carries out the reaction Cr(6+) + 2 NADH + O2 = Cr(3+) + superoxide + 2 NAD(+) + 2 H(+). The catalysed reaction is Cr(6+) + 2 NADPH + O2 = Cr(3+) + superoxide + 2 NADP(+) + 2 H(+). May be inhibited by divalent cations. Catalyzes the reduction of quinones. Acts by simultaneous two-electron transfer, avoiding formation of highly reactive semiquinone intermediates and producing quinols that promote tolerance of H(2)O(2). Quinone reduction is probably the primary biological role of ChrR. Can also reduce toxic chromate to insoluble and less toxic Cr(3+). Catalyzes the transfer of three electrons to Cr(6+) producing Cr(3+) and one electron to molecular oxygen. This reaction produces transiently a minimal amount of the toxic Cr(5+) species and reactive oxygen species (ROS). Chromate reduction protects the cell against chromate toxicity, but is likely a secondary activity. Can also reduce potassium ferricyanide and 2,6-dichloroindophenol. During chromate reduction, displays an eightfold preference for NADH over NADPH. In Pseudomonas putida (strain ATCC 47054 / DSM 6125 / CFBP 8728 / NCIMB 11950 / KT2440), this protein is Quinone reductase.